A 256-amino-acid chain; its full sequence is Putative ankyrin repeat protein PAE1861 (256 aa).

8 ANK repeats span residues 1 to 30, 34 to 63, 67 to 92, 93 to 122, 124 to 151, 155 to 184, 188 to 214, and 218 to 245; these read MDCN…SPDV, YGRT…DPNA, EGKT…ASAV, GVEE…RPGA, HGES…DPNA, HGKT…DVNV, AGRT…DLNA, and MGRT…PVPD.

The protein is Putative ankyrin repeat protein PAE1861 of Pyrobaculum aerophilum (strain ATCC 51768 / DSM 7523 / JCM 9630 / CIP 104966 / NBRC 100827 / IM2).